Reading from the N-terminus, the 209-residue chain is Ribosomal RNA small subunit methyltransferase G (209 aa).

Positions 74, 79, and 139 each coordinate S-adenosyl-L-methionine.

Belongs to the methyltransferase superfamily. RNA methyltransferase RsmG family.

The protein localises to the cytoplasm. The enzyme catalyses guanosine(527) in 16S rRNA + S-adenosyl-L-methionine = N(7)-methylguanosine(527) in 16S rRNA + S-adenosyl-L-homocysteine. Its function is as follows. Specifically methylates the N7 position of guanine in position 527 of 16S rRNA. The chain is Ribosomal RNA small subunit methyltransferase G from Halorhodospira halophila (strain DSM 244 / SL1) (Ectothiorhodospira halophila (strain DSM 244 / SL1)).